The following is a 623-amino-acid chain: Quinoprotein ethanol dehydrogenase (623 aa).

The N-terminal stretch at 1-34 is a signal peptide; it reads MTIRSLPAALSPLSMAVQAVLLVSSLALAPAANA. 2 residues coordinate Ca(2+): Asp45 and Asn51. Pyrroloquinoline quinone is bound at residue Glu95. The cysteines at positions 139 and 140 are disulfide-linked. Residues Arg145, Thr189, and 207 to 209 each bind pyrroloquinoline quinone; that span reads HGS. Glu213 contributes to the Ca(2+) binding site. The tract at residues 242–279 is disordered; that stretch reads GRLNGKDSTPTGDVKAPSWPDDPTTETGKVESWSHGGG. Ca(2+)-binding residues include Asn300 and Asp350. Asp350 serves as the catalytic Proton acceptor. Residue Arg378 coordinates pyrroloquinoline quinone. The tract at residues 414 to 436 is disordered; the sequence is RPVENEGQRPAKPLPGETKGKPV. WD repeat units lie at residues 515 to 556 and 559 to 601; these read EHNE…ELWK and TGSG…LTKP. Trp523 and Ala587 together coordinate pyrroloquinoline quinone.

The protein belongs to the bacterial PQQ dehydrogenase family. In terms of assembly, homodimer. Requires pyrroloquinoline quinone as cofactor. The cofactor is Ca(2+).

It localises to the periplasm. It carries out the reaction a primary alcohol + 2 Fe(III)-[cytochrome c] = an aldehyde + 2 Fe(II)-[cytochrome c] + 2 H(+). The enzyme catalyses ethanol + 2 Fe(III)-[cytochrome c] = acetaldehyde + 2 Fe(II)-[cytochrome c] + 2 H(+). The catalysed reaction is ethanol + A = acetaldehyde + AH2. It catalyses the reaction 1-propanol + 2 Fe(III)-[cytochrome c] = propanal + 2 Fe(II)-[cytochrome c] + 2 H(+). The protein operates within alcohol metabolism; ethanol degradation; acetate from ethanol: step 1/2. Its activity is regulated as follows. Enhanced by the presence of ethylamine or NH4(+) ions. In terms of biological role, catalyzes the oxidation of ethanol and other primary alcohols to the corresponding aldehydes, except methanol, which is not a substrate. Uses a specific inducible cytochrome c550, encoded by the adjacent gene in the locus, as electron acceptor. Is a key enzyme of the carbon and energy metabolism during growth of P.putida on ethanol as the sole carbon and energy source. Displays lower activity on secondary alcohols, aldehydes and diols. Is not active with sugar alcohols such as glycerol and D-sorbitol. In vitro, reacts well with phenazine methosulfate (PMS) as an electron acceptor but not with NAD(P), potassium ferricyanide, or molecular oxygen. The polypeptide is Quinoprotein ethanol dehydrogenase (Pseudomonas putida (Arthrobacter siderocapsulatus)).